The sequence spans 1730 residues: SH3 and multiple ankyrin repeat domains protein 3 (1730 aa).

The intramolecular interaction with the ANK repeats stretch occupies residues 1 to 75; the sequence is MDGPGASAVV…KFLDEERLLQ (75 aa). A Phosphotyrosine modification is found at tyrosine 122. ANK repeat units follow at residues 148–178, 182–211, 215–245, 249–278, 282–311, and 315–345; these read SGEC…HLDF, DGLT…SPDY, RGLT…QLGT, NGWQ…NMGA, SGNT…NKDV, and NSQT…DVVP. A disordered region spans residues 354-466; the sequence is KRRRLAGPSG…PPPRGPKRKL (113 aa). 4 positions are modified to phosphoserine: serine 373, serine 375, serine 387, and serine 394. Over residues 404–415 the composition is skewed to basic and acidic residues; sequence LQEEKDRDRDGE. Residues 444–460 show a composition bias toward pro residues; that stretch reads APGPGPASPAPPAPPPR. The region spanning 470 to 529 is the SH3 domain; that stretch reads VPGRKFIAVKAHSPQGEGEIPLHRGEAVKVLSIGEGGFWEGTVKGRTGWFPADCVEEVQM. Serine 482 is subject to Phosphoserine. Position 555 is a phosphotyrosine (tyrosine 555). Residues 570 to 664 form the PDZ domain; that stretch reads VAILQKRDHE…RLVMKVVSVT (95 aa). A disordered region spans residues 664–688; it reads TRKPEEDGARRRAPPPPKRAPSTTL. Residues 677 to 684 are required for interaction with ABI1; the sequence is PPPPKRAP. A phosphoserine mark is found at serine 694, serine 781, serine 790, and serine 801. Disordered stretches follow at residues 760 to 1460 and 1475 to 1524; these read QGLP…AAGP and GDPV…SLLD. Over residues 812–844 the composition is skewed to pro residues; it reads IPPPPQTAPPPPPAPYYFDSGPPPTFSPPPPPG. The segment covering 857 to 869 has biased composition (low complexity); the sequence is GLEARLGAGAAGL. A phosphoserine mark is found at serine 890 and serine 897. Threonine 912 carries the post-translational modification Phosphothreonine. At tyrosine 930 the chain carries Phosphotyrosine. Arginine 965 carries the post-translational modification Asymmetric dimethylarginine. Position 995 is a phosphoserine (serine 995). The span at 1016–1026 shows a compositional bias: basic and acidic residues; sequence VKERRLEERRR. Low complexity predominate over residues 1078-1092; that stretch reads LKPLVGGPSLGPSGS. The span at 1122–1131 shows a compositional bias: polar residues; sequence SQTPSRSPTP. A Phosphothreonine modification is found at threonine 1130. 4 positions are modified to phosphoserine: serine 1134, serine 1159, serine 1163, and serine 1166. Residues 1174–1194 are compositionally biased toward basic and acidic residues; sequence ARREAEKPPREERKSPEDKKS. A Phosphothreonine modification is found at threonine 1234. Low complexity predominate over residues 1235 to 1250; the sequence is PELAPAPMQAAAVAEP. Pro residues-rich tracts occupy residues 1251 to 1261 and 1321 to 1333; these read MPSPRAQPPGS and TPPP…PTTV. A Phosphoserine modification is found at serine 1253. A compositionally biased stretch (basic and acidic residues) spans 1360 to 1370; the sequence is ADTRSSSDPHL. Residues 1371 to 1392 show a composition bias toward low complexity; it reads ETTSTISTVSSMSTLSSESGEL. An SH3-binding motif is present at residues 1410 to 1416; that stretch reads PPVPPKP. At serine 1420 the chain carries Phosphoserine. Residues 1494–1514 are a coiled coil; that stretch reads ISELSSRLQQLNKDTRSLGEE. The segment covering 1495–1505 has biased composition (polar residues); sequence SELSSRLQQLN. Phosphoserine occurs at positions 1510, 1521, 1529, and 1539. 2 disordered regions span residues 1546–1584 and 1627–1663; these read ISAQ…PASL and VRSV…QQKP. The span at 1627 to 1637 shows a compositional bias: low complexity; the sequence is VRSVSARSRSP. Residues serine 1634, serine 1636, and serine 1638 each carry the phosphoserine modification. The segment covering 1638 to 1648 has biased composition (pro residues); the sequence is SPSPLPSPSPG. Positions 1649–1658 are enriched in low complexity; that stretch reads SGPSAGPRRP. Residues 1667–1730 enclose the SAM domain; that stretch reads WSKFDVGDWL…ERALRQLDGS (64 aa).

It belongs to the SHANK family. May homomultimerize via its SAM domain. Interacts with BAIAP2, DBNL and SLC17A7/VGLUT1. Interacts with DLGAP1/GKAP, GRM1/MGLUR1, GRM5/MGLUR5 and LZTS3 C-termini via its PDZ domain. Interacts with ABI1, HOMER1, HOMER2, HOMER3 and CTTN/cortactin SH3 domain. Is part of a complex with DLG4/PSD-95 and DLGAP1/GKAP. Interacts (via PDZ domain) with the GRIA1 subunit of the AMPA receptor (via PDZ-binding motif). Interacts with WASF1 and CYFIP2; the interactions mediate the association of SHANK3 with the WAVE1 complex. Interacts with ARPC2; the interaction probably mediates the association of SHANK3 with the Arp2/3 complex. Interacts (via ANK repeats) with SHARPIN and SPTAN1. Interacts (via PDZ domain) with ARHGAP44 (probably via PDZ-binding motif); the interaction takes place in dendritic spines and promotes GRIA1 exocytosis. Interacts with CAMK2A. Interacts with DIP2A. Interacts with ADGRL3. As to expression, in brain, highly expressed in striatum, thalamus, hippocampus and granule cells of the cerebellum.

Its subcellular location is the cytoplasm. It is found in the synapse. The protein localises to the postsynaptic density. It localises to the cell projection. The protein resides in the dendritic spine. In terms of biological role, major scaffold postsynaptic density protein which interacts with multiple proteins and complexes to orchestrate the dendritic spine and synapse formation, maturation and maintenance. Interconnects receptors of the postsynaptic membrane including NMDA-type and metabotropic glutamate receptors via complexes with GKAP/PSD-95 and HOMER, respectively, and the actin-based cytoskeleton. Plays a role in the structural and functional organization of the dendritic spine and synaptic junction through the interaction with Arp2/3 and WAVE1 complex as well as the promotion of the F-actin clusters. By way of this control of actin dynamics, participates in the regulation of developing neurons growth cone motility and the NMDA receptor-signaling. Also modulates GRIA1 exocytosis and GRM5/MGLUR5 expression and signaling to control the AMPA and metabotropic glutamate receptor-mediated synaptic transmission and plasticity. May be required at an early stage of synapse formation and be inhibited by IGF1 to promote synapse maturation. This chain is SH3 and multiple ankyrin repeat domains protein 3 (Shank3), found in Mus musculus (Mouse).